Here is a 295-residue protein sequence, read N- to C-terminus: Microcin B17-processing protein McbB (295 aa).

The protein localises to the cytoplasm. Functionally, necessary to process the inactive microcin B17 (McbA) precursor into the active peptide. This Escherichia coli protein is Microcin B17-processing protein McbB (mcbB).